The sequence spans 394 residues: NAD(P)H-quinone oxidoreductase subunit H (394 aa).

It belongs to the complex I 49 kDa subunit family. As to quaternary structure, NDH-1 can be composed of about 15 different subunits; different subcomplexes with different compositions have been identified which probably have different functions.

It is found in the cellular thylakoid membrane. The enzyme catalyses a plastoquinone + NADH + (n+1) H(+)(in) = a plastoquinol + NAD(+) + n H(+)(out). It carries out the reaction a plastoquinone + NADPH + (n+1) H(+)(in) = a plastoquinol + NADP(+) + n H(+)(out). NDH-1 shuttles electrons from an unknown electron donor, via FMN and iron-sulfur (Fe-S) centers, to quinones in the respiratory and/or the photosynthetic chain. The immediate electron acceptor for the enzyme in this species is believed to be plastoquinone. Couples the redox reaction to proton translocation, and thus conserves the redox energy in a proton gradient. Cyanobacterial NDH-1 also plays a role in inorganic carbon-concentration. This chain is NAD(P)H-quinone oxidoreductase subunit H, found in Prochlorococcus marinus (strain MIT 9211).